The chain runs to 1144 residues: MANRPAASALAGARSPSERQEPREPEVAPPGGDHVFCRKVSGVMVLSSDPPGPAAYRISDSSFVQCGSNCSMIIDGDVARGHLRDLEGATSTGAFVAISNVAAGGDGRTAVVALGGTSGPSATTSVGTQTSGEFLHGNPRTPEPQGPQAVPPPPPPPFPWGHECCARRDARGGAEKDVGAAESWSDGPSSDSETEDSDSSDEDTGSGSETLSRSSSIWAAGATDDDDSDSDSRSDDSVQPDVVVRRRWSDGPAPVAFPKPRRPGDSPGNPGLGAGTGPGSATDPRASADSDSAAHAAAPQADVAPVLDSQPTVGTDPGYPVPLELTPENAEAVARFLGDAVDREPALMLEYFCRCAREESKRVPPRTFGSAPRLTEDDFGLLNYALAEMRRLCLDLPPVPPNAYTPYHLREYATRLVNGFKPLVRRSARLYRILGILVHLRIRTREASFEEWMRSKEVDLDFGLTERLREHEAQLMILAQALNPYDCLIHSTPNTLVERGLQSALKYEEFYLKRFGGHYMESVFQMYTRIAGFLACRATRGMRHIALGRQGSWWEMFKFFFHRLYDHQIVPSTPAMLNLGTRNYYTSSCYLVNPQATTNQATLRAITGNVSAILARNGGIGLCMQAFNDASPGTASIMPALKVLDSLVAAHNKQSTRPTGACVYLEPWHSDVRAVLRMKGVLAGEEAQRCDNIFSALWMPDLFFKRLIRHLDGEKNVTWSLFDRDTSMSLADFHGEEFEKLYEHLEAMGFGETIPIQDLAYAIVRSAATTGSPFIMFKDAVNRHYIYDTQGAAIAGSNLCTEIVHPSSKRSSGVCNLGSVNLARCVSRRTFDFGMLRDAVQACVLMVNIMIDSTLQPTPQCARGHDNLRSMGIGMQGLHTACLKMGLDLESAEFRDLNTHIAEVMLLAAMKTSNALCVRGARPFSHFKRSMYRAGRFHWERFSNASPRYEGEWEMLRQSMMKHGLRNSQFIALMPTAASAQISDVSEGFAPLFTNLFSKVTRDGETLRPNTLLLKELERTFGGKRLLDAMDGLEAKQWSVAQALPCLDPAHPLRRFKTAFDYDQELLIDLCADRAPYVDHSQSMTLYVTEKADGTLPASTLVRLLVHAYKRGLKTGMYYCKVRKATNSGVFAGDDNIVCTSCAL.

The interval 1–33 (MANRPAASALAGARSPSERQEPREPEVAPPGGD) is disordered. Basic and acidic residues predominate over residues 16 to 26 (PSERQEPREPE). Positions 55 to 75 (AYRISDSSFVQCGSNCSMIID) match the RIP homotypic interaction motif (RHIM) motif. Residues 118–324 (SGPSATTSVG…TDPGYPVPLE (207 aa)) are disordered. The segment covering 119–132 (GPSATTSVGTQTSG) has biased composition (polar residues). The span at 141-159 (TPEPQGPQAVPPPPPPPFP) shows a compositional bias: pro residues. The segment covering 164-179 (CCARRDARGGAEKDVG) has biased composition (basic and acidic residues). Acidic residues predominate over residues 192 to 204 (SETEDSDSSDEDT). 2 stretches are compositionally biased toward low complexity: residues 205 to 216 (GSGSETLSRSSS) and 279 to 305 (GSAT…DVAP). Substrate-binding positions include threonine 573, 588 to 589 (SC), glycine 619, 798 to 802 (NLCTE), and 975 to 979 (PTAAS). A disulfide bridge connects residues cysteine 589 and cysteine 815. Asparagine 798 functions as the Proton acceptor in the catalytic mechanism. Cysteine 800 functions as the Cysteine radical intermediate in the catalytic mechanism. The Proton acceptor role is filled by glutamate 802.

The protein belongs to the ribonucleoside diphosphate reductase large chain family. As to quaternary structure, heterotetramer composed of a homodimer of the large subunit (R1) and a homodimer of the small subunit (R2). Larger multisubunit protein complex are also active, composed of (R1)n(R2)n. May self-assemble (via RIP homotypic interaction motif/RHIM) into homomeric fibrillar amyloid structures. Interacts (via RHIM) with human RIPK1 (via RHIM). Interacts (via RHIM) with human RIPK3 (via RHIM). May interact (via RHIM) with human ZBP1 (via RHIM). Interacts (via C-terminus) with host CASP8.

It catalyses the reaction a 2'-deoxyribonucleoside 5'-diphosphate + [thioredoxin]-disulfide + H2O = a ribonucleoside 5'-diphosphate + [thioredoxin]-dithiol. Functionally, ribonucleoside-diphosphate reductase holoenzyme that provides the precursors necessary for viral DNA synthesis. Allows virus growth in non-dividing cells, as well as reactivation from latency in infected hosts. Catalyzes the biosynthesis of deoxyribonucleotides from the corresponding ribonucleotides. The N-terminal region confers antiapoptotic activity in differentiated cells such as neurons and is important for viral reactivation to increase neural survivability. Prevents host necroptosis by targeting host RIPK1 and RIPK3, thereby hampering the formation of necroptotic RIPK1-RIPK3 complexes. May form hetero-amyloid structures with host proteins RIPK3 or ZBP1, thereby preventing RIPK3- and ZBP1-mediated necroptosis. In addition, inhibits extrinsic apoptosis by targeting host CASP8. In Homo sapiens (Human), this protein is Ribonucleoside-diphosphate reductase large subunit.